Here is a 307-residue protein sequence, read N- to C-terminus: Leucine-rich repeat-containing protein 59 (307 aa).

Topologically, residues 1–247 (MARANGRSQN…LAQRQSRLRK (247 aa)) are cytoplasmic. 5 LRR repeats span residues 10–31 (NLRD…SEVP), 40–61 (KATA…FCNL), 63–84 (HIVR…FGRL), 86–107 (NLQH…FAQL), and 109–131 (SLKW…AGDC). A coiled-coil region spans residues 156–222 (EIELQRKLQL…LNSNKKAEEE (67 aa)). The segment at 170–238 (KKKLEAKQRV…RMATPKEKKL (69 aa)) is disordered. Basic and acidic residues-rich tracts occupy residues 174-187 (EAKQ…EREM) and 194-238 (QQKE…EKKL). A helical membrane pass occupies residues 248 to 268 (IACILLFGLLVVLLVVVACRF). The Lumenal segment spans residues 269-307 (TDLKAINMCTSVNAIYKETLSALHSNPVLERFLQDPSSQ).

Interacts with SGO1.

The protein localises to the microsome membrane. The protein resides in the endoplasmic reticulum membrane. It localises to the nucleus envelope. Functionally, required for nuclear import of FGF1. In Xenopus laevis (African clawed frog), this protein is Leucine-rich repeat-containing protein 59 (lrrc59).